Here is a 162-residue protein sequence, read N- to C-terminus: Cytochrome B pre-mRNA-processing protein 6 (162 aa).

Ser2 is subject to N-acetylserine. Residue Thr97 is modified to Phosphothreonine.

The protein localises to the mitochondrion. This protein is involved in processing of the 5' terminus and the intervening sequences of cytochrome b pre-mRNA. In Saccharomyces cerevisiae (strain ATCC 204508 / S288c) (Baker's yeast), this protein is Cytochrome B pre-mRNA-processing protein 6 (CBP6).